The following is a 90-amino-acid chain: Phosphocarrier protein HPr (90 aa).

Residues 1-89 form the HPr domain; sequence MPALEITIIN…ELINNRFDEG (89 aa). The active-site Pros-phosphohistidine intermediate is H15.

This sequence belongs to the HPr family.

It is found in the cytoplasm. Functionally, general (non sugar-specific) component of the phosphoenolpyruvate-dependent sugar phosphotransferase system (sugar PTS). This major carbohydrate active-transport system catalyzes the phosphorylation of incoming sugar substrates concomitantly with their translocation across the cell membrane. The phosphoryl group from phosphoenolpyruvate (PEP) is transferred to the phosphoryl carrier protein HPr by enzyme I. Phospho-HPr then transfers it to the PTS EIIA domain. The chain is Phosphocarrier protein HPr (ptsH) from Pseudomonas aeruginosa (strain ATCC 15692 / DSM 22644 / CIP 104116 / JCM 14847 / LMG 12228 / 1C / PRS 101 / PAO1).